Here is a 393-residue protein sequence, read N- to C-terminus: Anhydro-N-acetylmuramic acid kinase (393 aa).

9–16 (GTSADGVD) contacts ATP.

This sequence belongs to the anhydro-N-acetylmuramic acid kinase family.

The catalysed reaction is 1,6-anhydro-N-acetyl-beta-muramate + ATP + H2O = N-acetyl-D-muramate 6-phosphate + ADP + H(+). Its pathway is amino-sugar metabolism; 1,6-anhydro-N-acetylmuramate degradation. It functions in the pathway cell wall biogenesis; peptidoglycan recycling. Catalyzes the specific phosphorylation of 1,6-anhydro-N-acetylmuramic acid (anhMurNAc) with the simultaneous cleavage of the 1,6-anhydro ring, generating MurNAc-6-P. Is required for the utilization of anhMurNAc either imported from the medium or derived from its own cell wall murein, and thus plays a role in cell wall recycling. This chain is Anhydro-N-acetylmuramic acid kinase, found in Acidithiobacillus ferrooxidans (strain ATCC 23270 / DSM 14882 / CIP 104768 / NCIMB 8455) (Ferrobacillus ferrooxidans (strain ATCC 23270)).